We begin with the raw amino-acid sequence, 418 residues long: Gamma-glutamyl phosphate reductase (418 aa).

This sequence belongs to the gamma-glutamyl phosphate reductase family.

The protein localises to the cytoplasm. It carries out the reaction L-glutamate 5-semialdehyde + phosphate + NADP(+) = L-glutamyl 5-phosphate + NADPH + H(+). It participates in amino-acid biosynthesis; L-proline biosynthesis; L-glutamate 5-semialdehyde from L-glutamate: step 2/2. Functionally, catalyzes the NADPH-dependent reduction of L-glutamate 5-phosphate into L-glutamate 5-semialdehyde and phosphate. The product spontaneously undergoes cyclization to form 1-pyrroline-5-carboxylate. This Citrifermentans bemidjiense (strain ATCC BAA-1014 / DSM 16622 / JCM 12645 / Bem) (Geobacter bemidjiensis) protein is Gamma-glutamyl phosphate reductase.